A 452-amino-acid chain; its full sequence is UDP-N-acetylmuramoylalanine--D-glutamate ligase (452 aa).

115–121 (GTNGKTT) is an ATP binding site.

The protein belongs to the MurCDEF family.

It localises to the cytoplasm. It catalyses the reaction UDP-N-acetyl-alpha-D-muramoyl-L-alanine + D-glutamate + ATP = UDP-N-acetyl-alpha-D-muramoyl-L-alanyl-D-glutamate + ADP + phosphate + H(+). The protein operates within cell wall biogenesis; peptidoglycan biosynthesis. In terms of biological role, cell wall formation. Catalyzes the addition of glutamate to the nucleotide precursor UDP-N-acetylmuramoyl-L-alanine (UMA). The polypeptide is UDP-N-acetylmuramoylalanine--D-glutamate ligase (Geobacter metallireducens (strain ATCC 53774 / DSM 7210 / GS-15)).